A 481-amino-acid chain; its full sequence is Squalene epoxidase erg1 (481 aa).

A helical transmembrane segment spans residues 28–48; it reads HADVVIIGAGVLGCALAVALG. FAD-binding positions include 38–39, 58–59, Arg66, and Arg138; these read VL and EA. Asn146 carries N-linked (GlcNAc...) asparagine glycosylation. FAD is bound by residues Asp319 and Met332. Helical transmembrane passes span 425 to 445 and 452 to 472; these read KPSVLFVHFFSVALLSLWVLL and LFPVALFKCIMTFWTACVVIF.

Belongs to the squalene monooxygenase family. Requires FAD as cofactor.

The protein localises to the endoplasmic reticulum membrane. It is found in the microsome membrane. The catalysed reaction is squalene + reduced [NADPH--hemoprotein reductase] + O2 = (S)-2,3-epoxysqualene + oxidized [NADPH--hemoprotein reductase] + H2O + H(+). Its pathway is steroid metabolism; ergosterol biosynthesis. In terms of biological role, squalene epoxidase; part of the third module of ergosterol biosynthesis pathway that includes the late steps of the pathway. Erg1 catalyzes the epoxidation of squalene into 2,3-epoxysqualene. The third module or late pathway involves the ergosterol synthesis itself through consecutive reactions that mainly occur in the endoplasmic reticulum (ER) membrane. Firstly, the squalene synthase erg9 catalyzes the condensation of 2 farnesyl pyrophosphate moieties to form squalene, which is the precursor of all steroids. Squalene synthase is crucial for balancing the incorporation of farnesyl diphosphate (FPP) into sterol and nonsterol isoprene synthesis. Secondly, squalene is converted into lanosterol by the consecutive action of the squalene epoxidase erg1 and the lanosterol synthase erg7. Then, the delta(24)-sterol C-methyltransferase erg6 methylates lanosterol at C-24 to produce eburicol. Eburicol is the substrate of the sterol 14-alpha demethylase encoded by cyp51A and cyp51B, to yield 4,4,24-trimethyl ergosta-8,14,24(28)-trienol. The C-14 reductase erg24 then reduces the C14=C15 double bond which leads to 4,4-dimethylfecosterol. A sequence of further demethylations at C-4, involving the C-4 demethylation complex containing the C-4 methylsterol oxidases erg25A or erg25B, the sterol-4-alpha-carboxylate 3-dehydrogenase erg26 and the 3-keto-steroid reductase erg27, leads to the production of fecosterol via 4-methylfecosterol. The C-8 sterol isomerase erg2 then catalyzes the reaction which results in unsaturation at C-7 in the B ring of sterols and thus converts fecosterol to episterol. The sterol-C5-desaturase erg3B then catalyzes the introduction of a C-5 double bond in the B ring to produce 5-dehydroepisterol. The 2 other sterol-C5-desaturases, erg3A and erg3C, seem to be less important in ergosterol biosynthesis. The C-22 sterol desaturase erg5 further converts 5-dehydroepisterol into ergosta-5,7,22,24(28)-tetraen-3beta-ol by forming the C-22(23) double bond in the sterol side chain. Finally, ergosta-5,7,22,24(28)-tetraen-3beta-ol is substrate of the C-24(28) sterol reductases erg4A and erg4B to produce ergosterol. Possible alternative sterol biosynthetic pathways might exist from fecosterol to ergosterol, depending on the activities of the erg3 isoforms. In Aspergillus fumigatus (strain ATCC MYA-4609 / CBS 101355 / FGSC A1100 / Af293) (Neosartorya fumigata), this protein is Squalene epoxidase erg1.